A 381-amino-acid chain; its full sequence is ATP synthase subunit a (381 aa).

The segment at 24 to 73 (PVAAPVEQHGQAPEAAPDAHGSPAGEPGAAVEAHAAAAEHGEAAGHEGGH) is disordered. Residues 47–59 (AGEPGAAVEAHAA) are compositionally biased toward low complexity. The segment covering 60–73 (AAEHGEAAGHEGGH) has biased composition (basic and acidic residues). Transmembrane regions (helical) follow at residues 128–148 (KHVV…LGAV), 190–210 (LVTA…PFSA), 215–235 (NLSV…YAAI), 255–275 (LAPL…TKPF), 290–310 (FVIL…VAFG), and 316–336 (LSIF…FTML). Residues 351–360 (DHGHAEEHGH) show a composition bias toward basic and acidic residues. The tract at residues 351 to 381 (DHGHAEEHGHAGPAAGSEHGSHVAGASPGHG) is disordered.

It belongs to the ATPase A chain family. In terms of assembly, F-type ATPases have 2 components, CF(1) - the catalytic core - and CF(0) - the membrane proton channel. CF(1) has five subunits: alpha(3), beta(3), gamma(1), delta(1), epsilon(1). CF(0) has three main subunits: a(1), b(2) and c(9-12). The alpha and beta chains form an alternating ring which encloses part of the gamma chain. CF(1) is attached to CF(0) by a central stalk formed by the gamma and epsilon chains, while a peripheral stalk is formed by the delta and b chains.

It is found in the cell inner membrane. In terms of biological role, key component of the proton channel; it plays a direct role in the translocation of protons across the membrane. This is ATP synthase subunit a from Anaeromyxobacter dehalogenans (strain 2CP-C).